The chain runs to 158 residues: Acetolactate synthase small subunit (158 aa).

An ACT domain is found at 4–79 (MIIAKLHNVT…DVIEVADITD (76 aa)).

Belongs to the acetolactate synthase small subunit family. In terms of assembly, dimer of large and small chains.

The enzyme catalyses 2 pyruvate + H(+) = (2S)-2-acetolactate + CO2. It participates in amino-acid biosynthesis; L-isoleucine biosynthesis; L-isoleucine from 2-oxobutanoate: step 1/4. It functions in the pathway amino-acid biosynthesis; L-valine biosynthesis; L-valine from pyruvate: step 1/4. The protein is Acetolactate synthase small subunit (ilvH) of Lactococcus lactis subsp. lactis (strain IL1403) (Streptococcus lactis).